The primary structure comprises 367 residues: UDP-N-acetylglucosamine--N-acetylmuramyl-(pentapeptide) pyrophosphoryl-undecaprenol N-acetylglucosamine transferase (367 aa).

UDP-N-acetyl-alpha-D-glucosamine contacts are provided by residues Thr-15–Gly-17, Asn-127, Arg-163, Ser-191, Ile-249, and Gln-294.

This sequence belongs to the glycosyltransferase 28 family. MurG subfamily.

The protein resides in the cell inner membrane. It catalyses the reaction di-trans,octa-cis-undecaprenyl diphospho-N-acetyl-alpha-D-muramoyl-L-alanyl-D-glutamyl-meso-2,6-diaminopimeloyl-D-alanyl-D-alanine + UDP-N-acetyl-alpha-D-glucosamine = di-trans,octa-cis-undecaprenyl diphospho-[N-acetyl-alpha-D-glucosaminyl-(1-&gt;4)]-N-acetyl-alpha-D-muramoyl-L-alanyl-D-glutamyl-meso-2,6-diaminopimeloyl-D-alanyl-D-alanine + UDP + H(+). It functions in the pathway cell wall biogenesis; peptidoglycan biosynthesis. Functionally, cell wall formation. Catalyzes the transfer of a GlcNAc subunit on undecaprenyl-pyrophosphoryl-MurNAc-pentapeptide (lipid intermediate I) to form undecaprenyl-pyrophosphoryl-MurNAc-(pentapeptide)GlcNAc (lipid intermediate II). This is UDP-N-acetylglucosamine--N-acetylmuramyl-(pentapeptide) pyrophosphoryl-undecaprenol N-acetylglucosamine transferase from Burkholderia cenocepacia (strain ATCC BAA-245 / DSM 16553 / LMG 16656 / NCTC 13227 / J2315 / CF5610) (Burkholderia cepacia (strain J2315)).